The primary structure comprises 444 residues: N-succinylarginine dihydrolase (444 aa).

Substrate contacts are provided by residues 19-28, Asn-110, and 137-138; these read SGLSFGNVAS and HR. Residue Glu-174 is part of the active site. Substrate is bound at residue Arg-214. The active site involves His-250. The substrate site is built by Asp-252 and Asn-362. The Nucleophile role is filled by Cys-368.

The protein belongs to the succinylarginine dihydrolase family. In terms of assembly, homodimer.

The catalysed reaction is N(2)-succinyl-L-arginine + 2 H2O + 2 H(+) = N(2)-succinyl-L-ornithine + 2 NH4(+) + CO2. The protein operates within amino-acid degradation; L-arginine degradation via AST pathway; L-glutamate and succinate from L-arginine: step 2/5. In terms of biological role, catalyzes the hydrolysis of N(2)-succinylarginine into N(2)-succinylornithine, ammonia and CO(2). The chain is N-succinylarginine dihydrolase from Photobacterium profundum (strain SS9).